Reading from the N-terminus, the 122-residue chain is Large ribosomal subunit protein bL12 (122 aa).

The protein belongs to the bacterial ribosomal protein bL12 family. Homodimer. Part of the ribosomal stalk of the 50S ribosomal subunit. Forms a multimeric L10(L12)X complex, where L10 forms an elongated spine to which 2 to 4 L12 dimers bind in a sequential fashion. Binds GTP-bound translation factors.

Forms part of the ribosomal stalk which helps the ribosome interact with GTP-bound translation factors. Is thus essential for accurate translation. The polypeptide is Large ribosomal subunit protein bL12 (Buchnera aphidicola subsp. Cinara cedri (strain Cc)).